A 158-amino-acid polypeptide reads, in one-letter code: MQGRLSAWLVKHELVHRSLGFDYQGIETLQIKPEDWHSIAVISYVYGYNYLRSQCAYDVAPGGLLASVYHLTRIQYGVDQPEEVCIKVFAKRRNPRIPSVFWIWKSADFQERESYDMLGISYDNHPRLKRILMPESWIGWPLRKDYIAPNFYEIQDAH.

Belongs to the complex I 30 kDa subunit family. NDH is composed of at least 16 different subunits, 5 of which are encoded in the nucleus.

Its subcellular location is the plastid. It is found in the chloroplast thylakoid membrane. The catalysed reaction is a plastoquinone + NADH + (n+1) H(+)(in) = a plastoquinol + NAD(+) + n H(+)(out). It catalyses the reaction a plastoquinone + NADPH + (n+1) H(+)(in) = a plastoquinol + NADP(+) + n H(+)(out). NDH shuttles electrons from NAD(P)H:plastoquinone, via FMN and iron-sulfur (Fe-S) centers, to quinones in the photosynthetic chain and possibly in a chloroplast respiratory chain. The immediate electron acceptor for the enzyme in this species is believed to be plastoquinone. Couples the redox reaction to proton translocation, and thus conserves the redox energy in a proton gradient. In Illicium oligandrum (Star anise), this protein is NAD(P)H-quinone oxidoreductase subunit J, chloroplastic.